Reading from the N-terminus, the 805-residue chain is Transmembrane channel-like protein 6 (805 aa).

A disordered region spans residues 1–29; that stretch reads MAQPLAFILDVPETPGDQGQGPSPYDESE. Residues 1–209 lie on the Lumenal side of the membrane; the sequence is MAQPLAFILD…SCCGRLRYAC (209 aa). T89 bears the Phosphothreonine mark. R94 carries the post-translational modification Omega-N-methylarginine. A glycan (N-linked (GlcNAc...) asparagine) is linked at N103. Residue T105 is modified to Phosphothreonine. Residues 210–230 form a helical membrane-spanning segment; the sequence is VLALHSLGLALLSALQALMPW. Over 231–249 the chain is Cytoplasmic; that stretch reads RYALKRIGGQFGSSVLSYF. A helical membrane pass occupies residues 250 to 270; the sequence is LFLKTLLAFNALLLLLLVAFI. The Lumenal segment spans residues 271–338; that stretch reads MGPQVAFPPA…TPRVGGLPYN (68 aa). N312 carries N-linked (GlcNAc...) asparagine glycosylation. A helical transmembrane segment spans residues 339 to 359; sequence MPLAYLSTVGVSFFITCITLV. The Cytoplasmic segment spans residues 360 to 431; the sequence is YSMAHSFGES…RSVCGRLRQA (72 aa). A helical membrane pass occupies residues 432–452; that stretch reads AVLGLVWLLCLGTALGCAVAV. At 453–469 the chain is on the lumenal side; sequence HVFSEFMIQSPEAAGQE. Residues 470-490 traverse the membrane as a helical segment; sequence AVLLVLPLVVGLLNLGAPYLC. Over 491–505 the chain is Cytoplasmic; sequence RVLAALEPHDSPVLE. A helical transmembrane segment spans residues 506-526; that stretch reads VYVAICRNLILKLAILGTLCY. At 527–553 the chain is on the lumenal side; that stretch reads HWLGRRVGVLQGQCWEDFVGQELYRFL. A helical membrane pass occupies residues 554–574; sequence VMDFVLMLLDTLFGELVWRII. At 575 to 604 the chain is on the cytoplasmic side; the sequence is SEKKLKRRRKPEFDIARNVLELIYGQTLTW. Residues 605 to 625 form a helical membrane-spanning segment; sequence LGVLFSPLLPAVQIIKLLLVF. The Lumenal segment spans residues 626–650; it reads YVKKTSLLANCQAPRRPWLASHMST. A helical transmembrane segment spans residues 651–671; the sequence is VFLTLLCFPAFLGAAVFLCYA. The Cytoplasmic segment spans residues 672–722; it reads VWQVKPSSTCGPFRTLDTMYEAGRVWVRHLEAAGPRVSWLPWVHRYLMENT. Residues 723-743 form a helical membrane-spanning segment; it reads FFVFLVSALLLAVIYLNIQVV. Over 744 to 805 the chain is Lumenal; sequence RGQRKVICLL…PALLTDEQDA (62 aa). A disordered region spans residues 778–805; it reads KEREERSRVGTTEEAAAPPALLTDEQDA.

It belongs to the TMC family. In terms of assembly, interacts with TMC8. Interacts and forms a complex with TMC8 and CIB1; the interaction stabilizes each component of the complex. Interacts and forms a complex with TMC8 and SLC30A1/ZNT1; the interaction regulates zinc transport into the ER. As to quaternary structure, (Microbial infection) Interacts with human papillomavirus 16/HPV16 protein E5; the interaction alleviates TMC6-mediated transcription factors inhibition. As to expression, expressed in placenta, prostate, testis, activated T-lymphocytes and lymphokine-activated killer (LAK) lymphocytes.

The protein localises to the endoplasmic reticulum membrane. It is found in the golgi apparatus membrane. The protein resides in the nucleus membrane. Its function is as follows. Acts as a regulatory protein involved in the regulation of numerous cellular processes. Together with its homolog TMC8/EVER2, forms a complex with CIB1 in lymphocytes and keratynocytes where TMC6 and TMC8 stabilize CIB1 and reciprocally. Together with TMC8, also forms a complex with and activates zinc transporter ZNT1 at the ER membrane of keratynocytes, thereby facilitating zinc uptake into the ER. Down-regulates the activity of transcription factors induced by zinc and cytokines. Also plays a role in thermal sensation by inhibiting the M-channel (KCNQ2-KCNQ3 channel) current in primary sensory neurons. The protein is Transmembrane channel-like protein 6 of Homo sapiens (Human).